The following is a 480-amino-acid chain: Uridine 5'-monophosphate synthase (480 aa).

Ala2 carries the post-translational modification N-acetylalanine. The tract at residues 2–214 is OPRTase; sequence AAADALLGSL…AFVAANPNDS (213 aa). Residue Tyr37 is modified to Phosphotyrosine. Residue Ser214 is modified to Phosphoserine. Positions 215–220 are domain linker; sequence LPSVKK. Positions 221-480 are OMPdecase; sequence EPKELSFGAR…WEAYLSRLAV (260 aa). Residue Ser257 participates in orotidine 5'-phosphate binding. UMP is bound by residues Ser257, Asp259, and 281-283; that span reads KIH. Residues Lys281, Lys314, Asp317, Thr321, Ser372, 430–432, and 450–451 contribute to the orotidine 5'-phosphate site; these read QQY and GR. Active-site for OMPdecase activity residues include Lys314 and Asp317. UMP contacts are provided by residues Asp317, Thr321, Ser372, 430 to 432, and 450 to 451; these read QQY and GR.

In the N-terminal section; belongs to the purine/pyrimidine phosphoribosyltransferase family. The protein in the C-terminal section; belongs to the OMP decarboxylase family. As to quaternary structure, homodimer; dimerization is required for enzymatic activity.

The enzyme catalyses orotidine 5'-phosphate + diphosphate = orotate + 5-phospho-alpha-D-ribose 1-diphosphate. It catalyses the reaction orotidine 5'-phosphate + H(+) = UMP + CO2. It functions in the pathway pyrimidine metabolism; UMP biosynthesis via de novo pathway; UMP from orotate: step 1/2. It participates in pyrimidine metabolism; UMP biosynthesis via de novo pathway; UMP from orotate: step 2/2. In terms of biological role, bifunctional enzyme catalyzing the last two steps of de novo pyrimidine biosynthesis, orotate phosphoribosyltransferase (OPRT), which converts orotate to orotidine-5'-monophosphate (OMP), and orotidine-5'-monophosphate decarboxylase (ODC), the terminal enzymatic reaction that decarboxylates OMP to uridine monophosphate (UMP). In Bos taurus (Bovine), this protein is Uridine 5'-monophosphate synthase (UMPS).